Reading from the N-terminus, the 297-residue chain is Ribosomal RNA small subunit methyltransferase A (297 aa).

N28, L30, G55, E76, D101, and N126 together coordinate S-adenosyl-L-methionine.

It belongs to the class I-like SAM-binding methyltransferase superfamily. rRNA adenine N(6)-methyltransferase family. RsmA subfamily.

The protein resides in the cytoplasm. It catalyses the reaction adenosine(1518)/adenosine(1519) in 16S rRNA + 4 S-adenosyl-L-methionine = N(6)-dimethyladenosine(1518)/N(6)-dimethyladenosine(1519) in 16S rRNA + 4 S-adenosyl-L-homocysteine + 4 H(+). Its function is as follows. Specifically dimethylates two adjacent adenosines (A1518 and A1519) in the loop of a conserved hairpin near the 3'-end of 16S rRNA in the 30S particle. May play a critical role in biogenesis of 30S subunits. This is Ribosomal RNA small subunit methyltransferase A from Latilactobacillus sakei subsp. sakei (strain 23K) (Lactobacillus sakei subsp. sakei).